A 289-amino-acid chain; its full sequence is Acetyl-coenzyme A carboxylase carboxyl transferase subunit beta (289 aa).

The CoA carboxyltransferase N-terminal domain maps to 28 to 289 (VMTKCPKCKK…QGGEMAVWQS (262 aa)). 4 residues coordinate Zn(2+): C32, C35, C51, and C54. The segment at 32–54 (CPKCKKIMYTKEVLKNLKVCVNC) adopts a C4-type zinc-finger fold.

It belongs to the AccD/PCCB family. In terms of assembly, acetyl-CoA carboxylase is a heterohexamer composed of biotin carboxyl carrier protein (AccB), biotin carboxylase (AccC) and two subunits each of ACCase subunit alpha (AccA) and ACCase subunit beta (AccD). Requires Zn(2+) as cofactor.

It localises to the cytoplasm. The catalysed reaction is N(6)-carboxybiotinyl-L-lysyl-[protein] + acetyl-CoA = N(6)-biotinyl-L-lysyl-[protein] + malonyl-CoA. The protein operates within lipid metabolism; malonyl-CoA biosynthesis; malonyl-CoA from acetyl-CoA: step 1/1. Component of the acetyl coenzyme A carboxylase (ACC) complex. Biotin carboxylase (BC) catalyzes the carboxylation of biotin on its carrier protein (BCCP) and then the CO(2) group is transferred by the transcarboxylase to acetyl-CoA to form malonyl-CoA. This Bacillus thuringiensis (strain Al Hakam) protein is Acetyl-coenzyme A carboxylase carboxyl transferase subunit beta.